A 379-amino-acid chain; its full sequence is Queuine tRNA-ribosyltransferase (379 aa).

Asp-94 acts as the Proton acceptor in catalysis. Substrate contacts are provided by residues 94–98 (DSGGF), Asp-148, Gln-191, and Gly-218. The segment at 249-255 (GVGSPDS) is RNA binding. Catalysis depends on Asp-268, which acts as the Nucleophile. Positions 273–277 (TRIAR) are RNA binding; important for wobble base 34 recognition. Residues Cys-306, Cys-308, Cys-311, and His-337 each contribute to the Zn(2+) site.

The protein belongs to the queuine tRNA-ribosyltransferase family. Homodimer. Within each dimer, one monomer is responsible for RNA recognition and catalysis, while the other monomer binds to the replacement base PreQ1. Requires Zn(2+) as cofactor.

It carries out the reaction 7-aminomethyl-7-carbaguanine + guanosine(34) in tRNA = 7-aminomethyl-7-carbaguanosine(34) in tRNA + guanine. Its pathway is tRNA modification; tRNA-queuosine biosynthesis. Catalyzes the base-exchange of a guanine (G) residue with the queuine precursor 7-aminomethyl-7-deazaguanine (PreQ1) at position 34 (anticodon wobble position) in tRNAs with GU(N) anticodons (tRNA-Asp, -Asn, -His and -Tyr). Catalysis occurs through a double-displacement mechanism. The nucleophile active site attacks the C1' of nucleotide 34 to detach the guanine base from the RNA, forming a covalent enzyme-RNA intermediate. The proton acceptor active site deprotonates the incoming PreQ1, allowing a nucleophilic attack on the C1' of the ribose to form the product. After dissociation, two additional enzymatic reactions on the tRNA convert PreQ1 to queuine (Q), resulting in the hypermodified nucleoside queuosine (7-(((4,5-cis-dihydroxy-2-cyclopenten-1-yl)amino)methyl)-7-deazaguanosine). This is Queuine tRNA-ribosyltransferase from Listeria welshimeri serovar 6b (strain ATCC 35897 / DSM 20650 / CCUG 15529 / CIP 8149 / NCTC 11857 / SLCC 5334 / V8).